The chain runs to 336 residues: Fructose-1,6-bisphosphatase class 1 (336 aa).

The Mg(2+) site is built by glutamate 90, aspartate 112, leucine 114, and aspartate 115. Substrate contacts are provided by residues 115–118 (DGSS), asparagine 211, and lysine 277. Glutamate 283 provides a ligand contact to Mg(2+).

This sequence belongs to the FBPase class 1 family. In terms of assembly, homotetramer. It depends on Mg(2+) as a cofactor.

The protein localises to the cytoplasm. The enzyme catalyses beta-D-fructose 1,6-bisphosphate + H2O = beta-D-fructose 6-phosphate + phosphate. Its pathway is carbohydrate biosynthesis; gluconeogenesis. This is Fructose-1,6-bisphosphatase class 1 from Pseudomonas fluorescens (strain ATCC BAA-477 / NRRL B-23932 / Pf-5).